Consider the following 397-residue polypeptide: Alpha-2B adrenergic receptor (397 aa).

The helical transmembrane segment at 1–25 (AIAAIIIFLILFTIFGNALVILAVL) threads the bilayer. The Cytoplasmic segment spans residues 26 to 36 (TSRSLRAPQNL). Residues 37–62 (FLVSLAAADILVATLIIPFSLANELL) traverse the membrane as a helical segment. The Extracellular portion of the chain corresponds to 63–72 (GYWYFRRMWC). Residues C72 and C151 are joined by a disulfide bond. The chain crosses the membrane as a helical span at residues 73 to 95 (KVYLALDVLFCTSSIVHLCAISL). The Cytoplasmic portion of the chain corresponds to 96–117 (DRYWAVSRALEYNSKRTPRRIK). Residues 118 to 140 (CIILMVWLIAAVISLPSLVYKGD) form a helical membrane-spanning segment. Residues 141–156 (QGPQPSGAPQCNLNQE) are Extracellular-facing. The chain crosses the membrane as a helical span at residues 157 to 180 (TWYILASSIGSFFAPCLIMILVYL). The Cytoplasmic portion of the chain corresponds to 181–361 (RIYLIAKRSH…LSREKRFTFV (181 aa)). Disordered regions lie at residues 193–212 (GPRA…RQVP) and 230–319 (AAGE…LQQP). The span at 280-300 (SLEEEAEEEEEGEEEREEECE) shows a compositional bias: acidic residues. Low complexity predominate over residues 301 to 319 (PQALPASPASACSPPLQQP). A helical transmembrane segment spans residues 362–385 (LAVVIGVFVLCWFPFFFSYSLGAI). Over 386–394 (CPQQCKVPH) the chain is Extracellular. A helical transmembrane segment spans residues 395 to 397 (DLF).

This sequence belongs to the G-protein coupled receptor 1 family. Adrenergic receptor subfamily. ADRA2B sub-subfamily. As to quaternary structure, interacts with RAB26. Interacts with PPP1R9B.

The protein resides in the cell membrane. In terms of biological role, alpha-2 adrenergic receptors mediate the catecholamine-induced inhibition of adenylate cyclase through the action of G proteins. This Talpa europaea (European mole) protein is Alpha-2B adrenergic receptor (ADRA2B).